The following is a 1017-amino-acid chain: MTRITKLCVLLLSSIGLLAAAQNQTETGWPLHDDGLTTDVQWDHYSFKVHGERIFVFSGEFHYWRIPVPGLWRDILEKIKAAGFTTFAFYSSWAWHAPNNHTVDFSTGARDITPIFELAKELGMYIIVRPGPYINAEASAGGFPLWLTTGDYGTLRNNDSRYTEAWKPYFEKMTEITSRYQITNGHNTFCYQIENEYGDQWLSDPSERVPNETAIAYMELLESSARENGILVPFTANDPNMNAMAWSRDWSNAGGNVDVVGLDSYPSCWTCDVSQCTSTNGEYVAYQVVEYYDYFLDFSPTMPSFMPEFQGGSYNPWAGPEGGCGDDTGVDFVNLFYRWNIAQRVTAMSLYMLYGGTNWGAIAAPVTATSYDYSSPISEDRSISSKYYETKLLSLFTRSARDLTMTDLIGNGTQYTNNTAVKAYELRNPTTNAGFYVTLHEDSTVGTNEAFSLRVNTSAGNLIVPRLGGSIRLNGHQSKIIVTDFTFGSETLLYSTAEVLTYAVIDKKPTLVLWVPTDESGEFAVKGAKSGSVVSKCQSCPAINFHQQGGNLIVGFTQSQGMSVVQIDNDIRVVLLDRTAAYKFWAPALTEDPLVPEDEAVVLIQGPYLVRSASLEKSTLAIKGDSINETAVEIFAPENVKTITWNGKQLKTSKSSYGSLKATIAAPASIQLPAFTSWKVNDSLPERLPTYDASGPAWVDANHMTTANPSKPATLPVLYADEYGFHNGVRLWRGYFNGTASGVFLNVQGGSAFGFSAYLNGHFLGSYLGNASIEQANQTFLFPNNITHPTTQNTLLVIHDDTGHDETTGALNPRGILEARLLPSDTTNNSTSPEFTHWRIAGTAGGESNLDPVRGAWNEDGLYAERVGWHLPGFDDSTWSSVSSSSSLSFTGATVKFFRTTIPLDIPRGLDVSISFVLGTPDNAPNAYRAQLFVNGYQYGRFNPYIGNQVVFPVPVGVLDYTGENTIGVAVWAQTEDGAGITVDWKVNYVADSSLDVSGLETGELRPGWSAERLKFA.

A signal peptide spans 1 to 20 (MTRITKLCVLLLSSIGLLAA). N23 is a glycosylation site (N-linked (GlcNAc...) asparagine). Residue Y90 coordinates substrate. N100 carries an N-linked (GlcNAc...) asparagine glycan. N135, A136, and E137 together coordinate substrate. A glycan (N-linked (GlcNAc...) asparagine) is linked at N158. N195 contacts substrate. E196 serves as the catalytic Proton donor. N211 carries an N-linked (GlcNAc...) asparagine glycan. Y265 serves as a coordination point for substrate. A disulfide bond links C271 and C324. E308 serves as the catalytic Nucleophile. Y373 contributes to the substrate binding site. N-linked (GlcNAc...) asparagine glycosylation is found at N411, N417, N456, N628, N681, N737, N770, N777, N785, N828, and N829.

The protein belongs to the glycosyl hydrolase 35 family.

The protein localises to the secreted. The catalysed reaction is Hydrolysis of terminal non-reducing beta-D-galactose residues in beta-D-galactosides.. Cleaves beta-linked terminal galactosyl residues from gangliosides, glycoproteins, and glycosaminoglycans. This chain is Probable beta-galactosidase B (lacB), found in Aspergillus niger (strain ATCC MYA-4892 / CBS 513.88 / FGSC A1513).